The sequence spans 569 residues: Glucose-6-phosphate isomerase, cytosolic 2 (569 aa).

Glutamate 360 acts as the Proton donor in catalysis. Catalysis depends on residues histidine 391 and lysine 516.

Belongs to the GPI family. As to quaternary structure, homodimer.

The protein resides in the cytoplasm. The enzyme catalyses alpha-D-glucose 6-phosphate = beta-D-fructose 6-phosphate. It participates in carbohydrate degradation; glycolysis; D-glyceraldehyde 3-phosphate and glycerone phosphate from D-glucose: step 2/4. The protein is Glucose-6-phosphate isomerase, cytosolic 2 (PGIC2) of Clarkia concinna (Red ribbons).